Consider the following 161-residue polypeptide: Peroxynitrite isomerase 2 (161 aa).

Positions 17–23 match the GXWXGXG motif; the sequence is GTWTGRG. Heme b is bound at residue histidine 152.

It belongs to the nitrobindin family. Homodimer. Heme b serves as cofactor.

It catalyses the reaction peroxynitrite = nitrate. Its pathway is nitrogen metabolism. Heme-binding protein able to scavenge peroxynitrite and to protect free L-tyrosine against peroxynitrite-mediated nitration, by acting as a peroxynitrite isomerase that converts peroxynitrite to nitrate. Therefore, this protein likely plays a role in peroxynitrite sensing and in the detoxification of reactive nitrogen and oxygen species (RNS and ROS, respectively). Is able to bind nitric oxide (NO) in vitro, but may act as a sensor of peroxynitrite levels in vivo. The chain is Peroxynitrite isomerase 2 from Mycobacterium avium (strain 104).